The following is a 510-amino-acid chain: Bifunctional pantoate ligase/cytidylate kinase (510 aa).

Residues 1-276 form a pantoate--beta-alanine ligase region; that stretch reads MKKVIIRKTE…CGETRLIDHV (276 aa). 29–36 is a binding site for ATP; that stretch reads MGNLHNGH. His36 (proton donor) is an active-site residue. Position 61 (Gln61) interacts with (R)-pantoate. Gln61 serves as a coordination point for beta-alanine. 150–153 serves as a coordination point for ATP; it reads GEKD. Gln156 provides a ligand contact to (R)-pantoate. ATP is bound at residue 187–190; that stretch reads LSSR. Residues 277 to 510 are cytidylate kinase; that stretch reads FLMKRRPIIA…DKIPKETEIK (234 aa).

In the N-terminal section; belongs to the pantothenate synthetase family. The protein in the C-terminal section; belongs to the cytidylate kinase family. Type 1 subfamily.

The protein resides in the cytoplasm. It carries out the reaction (R)-pantoate + beta-alanine + ATP = (R)-pantothenate + AMP + diphosphate + H(+). The enzyme catalyses CMP + ATP = CDP + ADP. The catalysed reaction is dCMP + ATP = dCDP + ADP. It functions in the pathway cofactor biosynthesis; (R)-pantothenate biosynthesis; (R)-pantothenate from (R)-pantoate and beta-alanine: step 1/1. Catalyzes the condensation of pantoate with beta-alanine in an ATP-dependent reaction via a pantoyl-adenylate intermediate. Functionally, catalyzes the transfer of a phosphate group from ATP to either CMP or dCMP to form CDP or dCDP and ADP, respectively. The polypeptide is Bifunctional pantoate ligase/cytidylate kinase (Prochlorococcus marinus (strain MIT 9215)).